A 338-amino-acid polypeptide reads, in one-letter code: Anthranilate phosphoribosyltransferase (338 aa).

5-phospho-alpha-D-ribose 1-diphosphate-binding positions include glycine 80, 83–84 (GD), threonine 88, 90–93 (NIST), 108–116 (KHGNRAVSS), and serine 120. Glycine 80 contacts anthranilate. Serine 92 is a binding site for Mg(2+). Asparagine 111 is an anthranilate binding site. Arginine 166 provides a ligand contact to anthranilate. Positions 225 and 226 each coordinate Mg(2+).

Belongs to the anthranilate phosphoribosyltransferase family. In terms of assembly, homodimer. Mg(2+) serves as cofactor.

It carries out the reaction N-(5-phospho-beta-D-ribosyl)anthranilate + diphosphate = 5-phospho-alpha-D-ribose 1-diphosphate + anthranilate. The protein operates within amino-acid biosynthesis; L-tryptophan biosynthesis; L-tryptophan from chorismate: step 2/5. Its function is as follows. Catalyzes the transfer of the phosphoribosyl group of 5-phosphorylribose-1-pyrophosphate (PRPP) to anthranilate to yield N-(5'-phosphoribosyl)-anthranilate (PRA). The sequence is that of Anthranilate phosphoribosyltransferase from Thermoanaerobacter sp. (strain X514).